The sequence spans 58 residues: ACLARGETCKDDCECCDCDNQCYCPFDWFGGKWHPVGCSCAYTNKYVCDHKKEKCKKA.

Cystine bridges form between Cys-2–Cys-16, Cys-9–Cys-22, Cys-15–Cys-40, Cys-24–Cys-38, and Cys-48–Cys-55.

As to expression, expressed by the venom gland.

The protein resides in the secreted. Functionally, non-toxic to mice. The sequence is that of U11-ctenitoxin-Pn1b from Phoneutria nigriventer (Brazilian armed spider).